A 467-amino-acid polypeptide reads, in one-letter code: Mothers against decapentaplegic homolog 9 (467 aa).

The MH1 domain occupies 16–140; it reads PAVKRLLGWK…YRRVETPVLP (125 aa). Zn(2+) is bound by residues Cys68, Cys113, Cys125, and His130. Residues 174–246 form a disordered region; the sequence is NATYPDSFQQ…SETQSGQPVD (73 aa). Residues 205 to 220 show a composition bias toward low complexity; it reads SYPHSPGSPSEPESPY. An MH2 domain is found at 273–467; that stretch reads WCSVAYYELN…SPHNPISSVS (195 aa).

This sequence belongs to the dwarfin/SMAD family. Interaction with the co-SMAD SMAD4. Interacts with PEBP2-alpha subunit. Interacts with RANBP3L. Post-translationally, phosphorylated on serine by BMP (bone morphogenetic proteins) type 1 receptor kinase. In terms of tissue distribution, expressed in heart, brain, placenta, lung, skeletal muscle, prostate, testis, ovary and small intestine. Also expressed in fetal brain, lung and kidney.

It localises to the cytoplasm. Its subcellular location is the nucleus. Functionally, transcriptional modulator activated by BMP (bone morphogenetic proteins) type 1 receptor kinase. SMAD9 is a receptor-regulated SMAD (R-SMAD). The polypeptide is Mothers against decapentaplegic homolog 9 (SMAD9) (Homo sapiens (Human)).